The following is a 122-amino-acid chain: Serum amyloid A-1 protein (122 aa).

Residues 1–18 (MKLLTGLVFCSLVLGVSS) form the signal peptide. An important for amyloid formation; forms amyloid fibrils in vitro region spans residues 19–45 (RSFFSFLGEAFDGARDMWRAYSDMREA). The propeptide at 95–122 (LADQAANEWGRSGKDPNHFRPAGLPEKY) is often cleaved during amyloidogenesis. A disordered region spans residues 98–122 (QAANEWGRSGKDPNHFRPAGLPEKY). The residue at position 101 (Asn101) is an N4,N4-dimethylasparagine.

The protein belongs to the SAA family. As to quaternary structure, homohexamer; dimer of trimers. Can form amyloid fibrils after partial proteolysis; the native, undenatured protein does not form amyloid fibrils (in vitro). Apolipoprotein of the HDL complex. Binds to heparin. Post-translationally, this protein is the precursor of amyloid protein A, which is formed by the removal of approximately 24 residues from the C-terminal end. Expressed by the liver; secreted in plasma (at protein level).

The protein localises to the secreted. Functionally, major acute phase protein. The polypeptide is Serum amyloid A-1 protein (SAA1) (Homo sapiens (Human)).